The primary structure comprises 214 residues: Thymidylate kinase (214 aa).

10-17 (GGEGAGKS) is an ATP binding site.

This sequence belongs to the thymidylate kinase family.

It catalyses the reaction dTMP + ATP = dTDP + ADP. In terms of biological role, phosphorylation of dTMP to form dTDP in both de novo and salvage pathways of dTTP synthesis. The sequence is that of Thymidylate kinase from Brucella suis biovar 1 (strain 1330).